Here is a 445-residue protein sequence, read N- to C-terminus: Probable fructoselysine/psicoselysine transporter FrlA (445 aa).

11 consecutive transmembrane segments (helical) span residues 10-32 (LGFW…FVSV), 39-61 (AGTP…PQMC), 97-119 (FWAN…LGFL), 126-143 (LGKF…LLHL), 153-175 (QTLI…IFWF), 188-210 (IGAT…SYTG), 230-252 (RALI…VISG), 272-294 (WIPA…VILG), 341-363 (GIFF…VMCF), 384-406 (LWRT…ILVA), and 411-433 (WAPI…AYAF).

It belongs to the amino acid-polyamine-organocation (APC) superfamily.

The protein localises to the cell inner membrane. The catalysed reaction is N(6)-(D-fructosyl)-L-lysine(in) = N(6)-(D-fructosyl)-L-lysine(out). It catalyses the reaction N(6)-(D-psicosyl)-L-lysine(in) = N(6)-(D-psicosyl)-L-lysine(out). Its pathway is carbohydrate metabolism; fructoselysine degradation. Functionally, is likely involved in the transport of fructoselysine and psicoselysine to the cytoplasm, where they are degraded. The protein is Probable fructoselysine/psicoselysine transporter FrlA (frlA) of Escherichia coli O157:H7.